The primary structure comprises 392 residues: Membrane cofactor protein (392 aa).

Residues 1 to 34 form the signal peptide; it reads MEPPGRRECPFPSWRFPGLLLAAMVLLLYSFSDA. Disulfide bonds link Cys-35/Cys-80, Cys-64/Cys-94, Cys-99/Cys-141, Cys-127/Cys-157, Cys-162/Cys-210, Cys-191/Cys-223, Cys-228/Cys-270, and Cys-256/Cys-283. Sushi domains are found at residues 35 to 96, 97 to 159, 160 to 225, and 226 to 285; these read CEEP…ACYR, ETCP…ICEK, VLCT…ECKV, and VKCR…KCLK. At 35 to 343 the chain is on the extracellular side; the sequence is CEEPPTFEAM…PEEGILDSLD (309 aa). Residues Asn-83 and Asn-114 are each glycosylated (N-linked (GlcNAc...) asparagine). O-linked (GalNAc...) threonine glycosylation occurs at Thr-163. N-linked (GlcNAc...) asparagine glycosylation occurs at Asn-273. O-linked (GalNAc...) serine glycans are attached at residues Ser-290 and Ser-291. The span at 291–315 shows a compositional bias: low complexity; sequence STKPPALSHSVSTSSTTKSPASSAS. The interval 291–328 is disordered; it reads STKPPALSHSVSTSSTTKSPASSASGPRPTYKPPVSNY. O-linked (GalNAc...) threonine glycosylation occurs at Thr-292. O-linked (GalNAc...) serine glycosylation is found at Ser-298, Ser-300, and Ser-302. O-linked (GalNAc...) threonine glycosylation is present at Thr-303. 2 O-linked (GalNAc...) serine glycosylation sites follow: Ser-304 and Ser-305. Residues Thr-306 and Thr-307 are each glycosylated (O-linked (GalNAc...) threonine). O-linked (GalNAc...) serine glycans are attached at residues Ser-309, Ser-312, Ser-313, and Ser-315. O-linked (GalNAc...) threonine glycosylation occurs at Thr-320. At Tyr-321 the chain carries Phosphotyrosine. Ser-326 carries O-linked (GalNAc...) serine glycosylation. Phosphotyrosine occurs at positions 340, 354, 355, 369, 370, and 384. The chain crosses the membrane as a helical span at residues 344-366; that stretch reads VWVIAVIVIAIVVGVAVICVVPY. The Cytoplasmic segment spans residues 367-392; that stretch reads RYLQRRKKKGTYLTDETHREVKFTSL.

Interacts with C3b. Interacts with C4b. Interacts with moesin/MSN. In terms of assembly, (Microbial infection) Interacts (via N-terminus) with measles virus H protein; this interaction allows attachment and viral entry of vaccine and laboratory-adapted strains. As to quaternary structure, (Microbial infection) Interacts with human herpesvirus 6 GH protein. (Microbial infection) Interacts with human adenovirus B/D fiber protein. In terms of assembly, (Microbial infection) Binds to Streptococcus pyogenes M protein and to type IV pili from Neisseria. In terms of processing, N-glycosylated on Asn-83; Asn-114 and Asn-273 in most tissues, but probably less N-glycosylated in testis. N-glycosylation on Asn-114 and Asn-273 is required for cytoprotective function. N-glycosylation on Asn-114 is required for Measles virus binding. N-glycosylation on Asn-273 is required for Neisseria binding. N-glycosylation is not required for human adenovirus binding. Extensively O-glycosylated in the Ser/Thr-rich domain. O-glycosylation is required for Neisseria binding but not for Measles virus or human adenovirus binding. Post-translationally, in epithelial cells, isoforms B/D/F/H/J/L/3 are phosphorylated by YES1 in response to infection by Neisseria gonorrhoeae; which promotes infectivity. In T-cells, these isoforms may be phosphorylated by LCK. Expressed by all cells except erythrocytes.

The protein resides in the cytoplasmic vesicle. It is found in the secretory vesicle. The protein localises to the acrosome inner membrane. Its function is as follows. Acts as a cofactor for complement factor I, a serine protease which protects autologous cells against complement-mediated injury by cleaving C3b and C4b deposited on host tissue. May be involved in the fusion of the spermatozoa with the oocyte during fertilization. Also acts as a costimulatory factor for T-cells which induces the differentiation of CD4+ into T-regulatory 1 cells. T-regulatory 1 cells suppress immune responses by secreting interleukin-10, and therefore are thought to prevent autoimmunity. (Microbial infection) A number of viral and bacterial pathogens seem to bind MCP in order to exploit its immune regulation property and directly induce an immunosuppressive phenotype in T-cells. In terms of biological role, (Microbial infection) Acts as a receptor for Adenovirus subgroup B2 and Ad3. Functionally, (Microbial infection) Acts as a receptor for cultured Measles virus. Its function is as follows. (Microbial infection) Acts as a receptor for Herpesvirus 6/HHV-6. (Microbial infection) May act as a receptor for pathogenic bacteria Neisseria and Streptococcus pyogenes. The protein is Membrane cofactor protein (CD46) of Homo sapiens (Human).